A 399-amino-acid polypeptide reads, in one-letter code: MLAQSCCLRLLILLLLFKSTCSVREKSQKYFKNRKLRERRIKLYGTKKTEIQPLLISTWNYTDANLQAWSVLQQGPRRTRMAVMQGCMACQNQRCGRLLAGGSSPDSEGTLTLEAAIMDGEHLEYGAVAAMEGARNAILVADAVLRYTKHSVLVGKSATKFARSLGYKEEFLTDGRTKSVWKKWRSNGCQPNFWRDVRPPPTENCGPYTPLPEHLHQHPMHQEYAITQGQHDQLAFLALDAEGKFHVASQSSGAQFRIPGRVGDAAVPGAGIYADNDVGGAVASGDGDVLMRHLPAFLAVEAMRAGKRPDQAAKWVVQRLLRHNTEFNGAVVVVNRRGIYAAACAGLDEFHFVVSGGKGYLIMARVERIKCLERESEVVDDGPKGLFPTIPEKQAVPRG.

The signal sequence occupies residues 1-22 (MLAQSCCLRLLILLLLFKSTCS). 3 disulfides stabilise this stretch: C90–C95, C189–C205, and C344–C371.

It belongs to the Ntn-hydrolase family.

In Drosophila yakuba (Fruit fly), this protein is L-asparaginase-like protein GE13669.